The following is a 252-amino-acid chain: Flavin-dependent thymidylate synthase (252 aa).

The 229-residue stretch at 7–235 (LDVQLVACST…PTVFSDFETS (229 aa)) folds into the ThyX domain. Residues 94–97 (ELVR), 105–109 (QLSQR), and R174 contribute to the dUMP site. Residues 97-99 (RHR) and Q105 each bind FAD. The ThyX motif signature appears at 97–107 (RHRHFSFSQLS). Residues 190–192 (NFR) and H196 each bind FAD. R201 contacts dUMP. Residue R201 is the Involved in ionization of N3 of dUMP, leading to its activation of the active site.

The protein belongs to the thymidylate synthase ThyX family. Homotetramer. The cofactor is FAD.

It carries out the reaction dUMP + (6R)-5,10-methylene-5,6,7,8-tetrahydrofolate + NADPH + H(+) = dTMP + (6S)-5,6,7,8-tetrahydrofolate + NADP(+). The protein operates within pyrimidine metabolism; dTTP biosynthesis. Functionally, catalyzes the reductive methylation of 2'-deoxyuridine-5'-monophosphate (dUMP) to 2'-deoxythymidine-5'-monophosphate (dTMP) while utilizing 5,10-methylenetetrahydrofolate (mTHF) as the methyl donor, and NADPH and FADH(2) as the reductant. This Corynebacterium diphtheriae (strain ATCC 700971 / NCTC 13129 / Biotype gravis) protein is Flavin-dependent thymidylate synthase.